Reading from the N-terminus, the 206-residue chain is Interleukin-24 (206 aa).

The signal sequence occupies residues 1–51; sequence MNFQQRLQSLWTLARPFCPPLLATASQMQMVVLPCLGFTLLLWSQVSGAQG. Cys59 and Cys106 are oxidised to a cystine. Residues Asn85 and Asn99 are each glycosylated (N-linked (GlcNAc...) asparagine). Residue Lys122 forms a Glycyl lysine isopeptide (Lys-Gly) (interchain with G-Cter in ubiquitin) linkage. The N-linked (GlcNAc...) asparagine glycan is linked to Asn126.

Belongs to the IL-10 family. Post-translationally, glycosylated. Ubiquitination at Lys-122 promotes proteasomal degradation. Up-regulated in melanoma cells induced to terminally differentiate.

Its subcellular location is the secreted. In terms of biological role, multifunctional cytokine mainly produced by T-cells that plays a regulatory role in immune response, tissue homeostasis, host defense, and oncogenesis. Possesses antiviral functions and induces the type I interferon response during influenza infection. Signals through two receptor complexes IL20RA/IL20RB or IL20RB/IL22RA1. In turn, stimulates the JAK1-STAT3 and MAPK pathways and promotes the secretion of pro-inflammatory mediators including IL8 and MMP1. Intracellularly, maintains endoplasmic reticulum homeostasis by restricting the eIF2alpha-CHOP pathway-mediated stress signal. In addition, acts as a quality control mechanism for the ubiquitin proteasome system by alerting the cell to proteasome dysfunction through activation of PKR/EIF2AK2. The sequence is that of Interleukin-24 (IL24) from Homo sapiens (Human).